Reading from the N-terminus, the 261-residue chain is Ribosomal RNA small subunit methyltransferase J (261 aa).

S-adenosyl-L-methionine-binding positions include R109–D110, E125–R126, and D179.

The protein belongs to the methyltransferase superfamily. RsmJ family.

Its subcellular location is the cytoplasm. The catalysed reaction is guanosine(1516) in 16S rRNA + S-adenosyl-L-methionine = N(2)-methylguanosine(1516) in 16S rRNA + S-adenosyl-L-homocysteine + H(+). Specifically methylates the guanosine in position 1516 of 16S rRNA. This chain is Ribosomal RNA small subunit methyltransferase J, found in Pseudomonas aeruginosa (strain ATCC 15692 / DSM 22644 / CIP 104116 / JCM 14847 / LMG 12228 / 1C / PRS 101 / PAO1).